The sequence spans 361 residues: Riboflavin biosynthesis protein RibD (361 aa).

Residues 1–122 (MEEYYMKLAL…MMKEAGIEVR (122 aa)) form the CMP/dCMP-type deaminase domain. The tract at residues 1–144 (MEEYYMKLAL…EKFLHFMRTG (144 aa)) is deaminase. Histidine 49 lines the Zn(2+) pocket. Glutamate 51 serves as the catalytic Proton donor. Positions 74 and 83 each coordinate Zn(2+). A reductase region spans residues 145-361 (LPYVTLKAAA…IKLTAKPTKE (217 aa)). Alanine 153 provides a ligand contact to NADP(+). Serine 167 is a substrate binding site. Residue tryptophan 169 participates in NADP(+) binding. Arginine 183 serves as a coordination point for substrate. NADP(+) is bound by residues threonine 195 and aspartate 199. Positions 203 and 206 each coordinate substrate. Position 221 (threonine 221) interacts with NADP(+). Glutamate 290 lines the substrate pocket. NADP(+) is bound at residue 292 to 298 (GSAVHGS).

This sequence in the N-terminal section; belongs to the cytidine and deoxycytidylate deaminase family. In the C-terminal section; belongs to the HTP reductase family. As to quaternary structure, homotetramer. Requires Zn(2+) as cofactor.

The enzyme catalyses 2,5-diamino-6-hydroxy-4-(5-phosphoribosylamino)-pyrimidine + H2O + H(+) = 5-amino-6-(5-phospho-D-ribosylamino)uracil + NH4(+). It catalyses the reaction 5-amino-6-(5-phospho-D-ribitylamino)uracil + NADP(+) = 5-amino-6-(5-phospho-D-ribosylamino)uracil + NADPH + H(+). Its pathway is cofactor biosynthesis; riboflavin biosynthesis; 5-amino-6-(D-ribitylamino)uracil from GTP: step 2/4. It participates in cofactor biosynthesis; riboflavin biosynthesis; 5-amino-6-(D-ribitylamino)uracil from GTP: step 3/4. Functionally, converts 2,5-diamino-6-(ribosylamino)-4(3h)-pyrimidinone 5'-phosphate into 5-amino-6-(ribosylamino)-2,4(1h,3h)-pyrimidinedione 5'-phosphate. In Bacillus subtilis (strain 168), this protein is Riboflavin biosynthesis protein RibD (ribD).